The primary structure comprises 77 residues: Sec-independent protein translocase protein TatA (77 aa).

The helical transmembrane segment at 1-21 threads the bilayer; the sequence is MGGLSIWHWLIVLLIVALVFG. The interval 43-77 is disordered; that stretch reads MKESEAPADAQQLPRSGSVNVDAKDAARSSDSNKA. The segment covering 64-77 has biased composition (basic and acidic residues); that stretch reads DAKDAARSSDSNKA.

Belongs to the TatA/E family. In terms of assembly, the Tat system comprises two distinct complexes: a TatABC complex, containing multiple copies of TatA, TatB and TatC subunits, and a separate TatA complex, containing only TatA subunits. Substrates initially bind to the TatABC complex, which probably triggers association of the separate TatA complex to form the active translocon.

The protein localises to the cell inner membrane. Part of the twin-arginine translocation (Tat) system that transports large folded proteins containing a characteristic twin-arginine motif in their signal peptide across membranes. TatA could form the protein-conducting channel of the Tat system. This is Sec-independent protein translocase protein TatA from Burkholderia mallei (strain NCTC 10247).